The sequence spans 206 residues: Eukaryotic translation initiation factor isoform 4E-2 (206 aa).

An intrachain disulfide couples Cys-103 to Cys-142.

The protein belongs to the eukaryotic initiation factor 4E family. EIF4F is a multi-subunit complex, the composition of which varies with external and internal environmental conditions. It is composed of at least EIF4A, EIF4E and EIF4G. EIF4E is also known to interact with other partners. In higher plants two isoforms of EIF4F have been identified, named isoform EIF4F and isoform EIF(iso)4F. Isoform EIF4F has subunits p220 and p26, whereas isoform EIF(iso)4F has subunits p82 and p28. According to the redox status, the Cys-103-Cys-142 disulfide bridge may have a role in regulating protein function by affecting its ability to bind capped mRNA.

In terms of biological role, recognizes and binds the 7-methylguanosine-containing mRNA cap during an early step in the initiation of protein synthesis and facilitates ribosome binding by inducing the unwinding of the mRNAs secondary structures. In Oryza sativa subsp. japonica (Rice), this protein is Eukaryotic translation initiation factor isoform 4E-2.